We begin with the raw amino-acid sequence, 329 residues long: uncharacterized protein (329 aa).

Residues 56 to 247 are a coiled coil; sequence LNKEEQFQED…EAEKTHQAKL (192 aa).

This is an uncharacterized protein from Bos taurus (Bovine).